The primary structure comprises 238 residues: Aspartate/glutamate leucyltransferase (238 aa).

The protein belongs to the R-transferase family. Bpt subfamily.

The protein localises to the cytoplasm. The enzyme catalyses N-terminal L-glutamyl-[protein] + L-leucyl-tRNA(Leu) = N-terminal L-leucyl-L-glutamyl-[protein] + tRNA(Leu) + H(+). It carries out the reaction N-terminal L-aspartyl-[protein] + L-leucyl-tRNA(Leu) = N-terminal L-leucyl-L-aspartyl-[protein] + tRNA(Leu) + H(+). In terms of biological role, functions in the N-end rule pathway of protein degradation where it conjugates Leu from its aminoacyl-tRNA to the N-termini of proteins containing an N-terminal aspartate or glutamate. In Aeromonas hydrophila subsp. hydrophila (strain ATCC 7966 / DSM 30187 / BCRC 13018 / CCUG 14551 / JCM 1027 / KCTC 2358 / NCIMB 9240 / NCTC 8049), this protein is Aspartate/glutamate leucyltransferase.